We begin with the raw amino-acid sequence, 426 residues long: Gamma-glutamyl phosphate reductase (426 aa).

This sequence belongs to the gamma-glutamyl phosphate reductase family.

The protein localises to the cytoplasm. It carries out the reaction L-glutamate 5-semialdehyde + phosphate + NADP(+) = L-glutamyl 5-phosphate + NADPH + H(+). It functions in the pathway amino-acid biosynthesis; L-proline biosynthesis; L-glutamate 5-semialdehyde from L-glutamate: step 2/2. Its function is as follows. Catalyzes the NADPH-dependent reduction of L-glutamate 5-phosphate into L-glutamate 5-semialdehyde and phosphate. The product spontaneously undergoes cyclization to form 1-pyrroline-5-carboxylate. The polypeptide is Gamma-glutamyl phosphate reductase (Cupriavidus pinatubonensis (strain JMP 134 / LMG 1197) (Cupriavidus necator (strain JMP 134))).